Reading from the N-terminus, the 128-residue chain is Large ribosomal subunit protein uL22 (128 aa).

This sequence belongs to the universal ribosomal protein uL22 family. In terms of assembly, part of the 50S ribosomal subunit.

Its function is as follows. This protein binds specifically to 23S rRNA; its binding is stimulated by other ribosomal proteins, e.g. L4, L17, and L20. It is important during the early stages of 50S assembly. It makes multiple contacts with different domains of the 23S rRNA in the assembled 50S subunit and ribosome. The globular domain of the protein is located near the polypeptide exit tunnel on the outside of the subunit, while an extended beta-hairpin is found that lines the wall of the exit tunnel in the center of the 70S ribosome. This Methylocella silvestris (strain DSM 15510 / CIP 108128 / LMG 27833 / NCIMB 13906 / BL2) protein is Large ribosomal subunit protein uL22.